Reading from the N-terminus, the 355-residue chain is Uroporphyrinogen decarboxylase (355 aa).

Substrate is bound by residues 38-42, Asp-87, Tyr-162, Ser-217, and His-331; that span reads RQAGR.

Belongs to the uroporphyrinogen decarboxylase family. In terms of assembly, homodimer.

It localises to the cytoplasm. The enzyme catalyses uroporphyrinogen III + 4 H(+) = coproporphyrinogen III + 4 CO2. The protein operates within porphyrin-containing compound metabolism; protoporphyrin-IX biosynthesis; coproporphyrinogen-III from 5-aminolevulinate: step 4/4. Its function is as follows. Catalyzes the decarboxylation of four acetate groups of uroporphyrinogen-III to yield coproporphyrinogen-III. The protein is Uroporphyrinogen decarboxylase of Streptomyces avermitilis (strain ATCC 31267 / DSM 46492 / JCM 5070 / NBRC 14893 / NCIMB 12804 / NRRL 8165 / MA-4680).